Reading from the N-terminus, the 142-residue chain is MKTFSAKARDVKRDWLLIDADGKTLGRLATKIASCLRGKHKPEYTPHTDIGDYIVVINASKIKVTGNKFEDKIYYHHTGYVGNLKSIAFKDLQTKNPETIINKAVKGMLPKGPLGRDMFKKMKVFVDSEHTHGAQQPKVLDI.

The protein belongs to the universal ribosomal protein uL13 family. Part of the 50S ribosomal subunit.

Functionally, this protein is one of the early assembly proteins of the 50S ribosomal subunit, although it is not seen to bind rRNA by itself. It is important during the early stages of 50S assembly. The polypeptide is Large ribosomal subunit protein uL13 (Vesicomyosocius okutanii subsp. Calyptogena okutanii (strain HA)).